Here is a 352-residue protein sequence, read N- to C-terminus: D-arabitol-phosphate dehydrogenase (352 aa).

Mn(2+) contacts are provided by C43, H65, C96, C99, C102, C110, and E151.

Belongs to the zinc-containing alcohol dehydrogenase family. As to quaternary structure, homotetramer. It depends on Mn(2+) as a cofactor.

The enzyme catalyses D-arabinitol 1-phosphate + NAD(+) = D-xylulose 5-phosphate + NADH + H(+). With respect to regulation, inhibited by EDTA, 4-hydroxymercuribenzoic acid (PHMB), mercury and zinc ions at a concentration of 2 mM. Its function is as follows. Involved in the arabitol catabolism via the arabitol phosphate route. Catalyzes only the transformation of D-arabitol 1-phosphate (Arb1P) and D-arabitol 5-phosphate (Arb5P) into D-xylulose 5-phosphate (Xlu5P) and ribulose 5-phosphate, respectively. It can use both NAD and NADP. In Enterococcus avium (Streptococcus avium), this protein is D-arabitol-phosphate dehydrogenase.